The following is a 472-amino-acid chain: Divinyl ether synthase CYP74 (472 aa).

A heme-binding site is contributed by Cys-425.

Belongs to the cytochrome P450 family. The cofactor is heme. As to expression, expressed mainly in bulbs, and at lower levels in roots.

It carries out the reaction (13S)-hydroperoxy-(9Z,11E)-octadecadienoate = etheroleate + H2O. The catalysed reaction is (13S)-hydroperoxy-(9Z,11E,15Z)-octadecatrienoate = etherolenate + H2O. The enzyme catalyses (9S)-hydroperoxy-(10E,12Z)-octadecadienoate = colneleate + H2O. It catalyses the reaction (9S)-hydroperoxy-(10E,12Z,15Z)-octadecatrienoate = colnelenate + H2O. Its pathway is lipid metabolism; oxylipin biosynthesis. In terms of biological role, divinyl ether synthase involved in oxylipin biosynthesis. Catalyzes the conversion of (13S)-hydroperoxy-(9Z,11E)-octadecadienoate (13-HPOD) to etheroleate and (13S)-hydroperoxy-(9Z,11E,15Z)-octadecatrienoate (13-HPOT) to etherolenate. Catalyzes the conversion of (9S)-hydroperoxy-(10E,12Z)-octadecadienoate (9-HPOD) to colneleate and (9S)-hydroperoxy-(10E,12Z,15Z)-octadecatrienoate (9-HPOT) colnelenate. In Allium sativum (Garlic), this protein is Divinyl ether synthase CYP74.